A 476-amino-acid polypeptide reads, in one-letter code: Cytosolic Fe-S cluster assembly factor narfl (476 aa).

Residues Cys24, Cys71, Cys74, Cys77, Cys190, Cys246, Cys395, and Cys399 each coordinate [4Fe-4S] cluster.

Belongs to the NARF family. As to quaternary structure, component of the CIA complex.

In terms of biological role, component of the cytosolic iron-sulfur protein assembly (CIA) complex, a multiprotein complex that mediates the incorporation of iron-sulfur cluster into extramitochondrial Fe/S proteins. The sequence is that of Cytosolic Fe-S cluster assembly factor narfl (narfl) from Xenopus tropicalis (Western clawed frog).